We begin with the raw amino-acid sequence, 353 residues long: Phosphate acyltransferase (353 aa).

It belongs to the PlsX family. In terms of assembly, homodimer. Probably interacts with PlsY.

It localises to the cytoplasm. The enzyme catalyses a fatty acyl-[ACP] + phosphate = an acyl phosphate + holo-[ACP]. It participates in lipid metabolism; phospholipid metabolism. Its function is as follows. Catalyzes the reversible formation of acyl-phosphate (acyl-PO(4)) from acyl-[acyl-carrier-protein] (acyl-ACP). This enzyme utilizes acyl-ACP as fatty acyl donor, but not acyl-CoA. The polypeptide is Phosphate acyltransferase (Myxococcus xanthus (strain DK1622)).